The primary structure comprises 346 residues: Tetraacyldisaccharide 4'-kinase (346 aa).

Residue 54 to 61 coordinates ATP; it reads TVGGAGKT.

It belongs to the LpxK family.

The enzyme catalyses a lipid A disaccharide + ATP = a lipid IVA + ADP + H(+). The protein operates within glycolipid biosynthesis; lipid IV(A) biosynthesis; lipid IV(A) from (3R)-3-hydroxytetradecanoyl-[acyl-carrier-protein] and UDP-N-acetyl-alpha-D-glucosamine: step 6/6. Functionally, transfers the gamma-phosphate of ATP to the 4'-position of a tetraacyldisaccharide 1-phosphate intermediate (termed DS-1-P) to form tetraacyldisaccharide 1,4'-bis-phosphate (lipid IVA). The chain is Tetraacyldisaccharide 4'-kinase from Sinorhizobium fredii (strain NBRC 101917 / NGR234).